The sequence spans 1927 residues: Immunoglobulin A1 protease (1927 aa).

The first 42 residues, 1-42, serve as a signal peptide directing secretion; that stretch reads MEKYFGEKQERFSFRKLSVGLVSATISSLFFMSVLASSSVDA. Positions 43–99 are excised as a propeptide; that stretch reads QETAGVHYKYVADSELSSEEKKQLVYDIPTYVENDDETYYLVYKLNSQNQLAELPNT. The LPXTG sorting signal signature appears at 96–100; it reads LPNTG. T99 bears the Pentaglycyl murein peptidoglycan amidated threonine mark. 2 consecutive transmembrane segments (helical) span residues 106–125 and 132–154; these read QALV…FAVS and KTVL…VHAL. Over 155–1927 the chain is Extracellular; sequence ENHLLLNYNT…FRRSIFENKK (1773 aa). Residues 235–246 show a composition bias toward polar residues; sequence QEQTPVSSTKPT. Disordered stretches follow at residues 235-305, 371-394, and 426-640; these read QEQT…NPQD, SREI…TKKT, and EAVV…PEKT. Over residues 276-296 the composition is skewed to basic and acidic residues; the sequence is LAEHKNLETKKEEKISPKEKT. One can recognise a G5 domain in the interval 314–393; sequence KPELLYREET…PRIVEKGTKK (80 aa). Repeat copies occupy residues 419-435, 436-452, and 453-469. Residues 419-469 form a 3 X 17 AA approximate tandem repeats region; sequence AIQPELPEAVVSDKGEPEVQPTLPEAVVTDKGEPAVQPELPEAVVSDKGEP. The segment covering 485–511 has biased composition (basic and acidic residues); that stretch reads VKPETPVEKTKEQGPEKTEEVPVKPTE. Composition is skewed to polar residues over residues 516 to 529, 538 to 559, and 568 to 606; these read NPNE…SIQG, EDTQ…SNKP, and ESNQ…STED. Low complexity predominate over residues 609–619; the sequence is TKSNTSNSNGN. Basic and acidic residues predominate over residues 620–640; it reads EEIKQENELDPDKKVEDPEKT. Residue H1565 coordinates Zn(2+). E1566 is a catalytic residue. Positions 1569 and 1589 each coordinate Zn(2+).

Belongs to the peptidase M26 family. The cofactor is Zn(2+). The Gram-positive cell-wall anchor motif LPXTG is located in the N-terminal part, in contrast to such motifs in other known streptococcal and staphylococcal proteins. The protease could be cleaved by the sortase and anchored in the membrane via the two potential N-terminal transmembrane domains, whereas the propeptide located prior to the LPXTG motif would remain attached to the cell wall peptidoglycan by an amide bond.

It is found in the secreted. The protein localises to the cell wall. The protein resides in the membrane. It catalyses the reaction Cleavage of Pro-|-Thr bond in the hinge region of the heavy chain of human IgA.. Its function is as follows. Zinc metalloproteinase which cleaves human immunoglobulin A1 (IgA1) in the hinge region, rendering it less efficient in coating the surface of colonizing or invading pneumococci. May be responsible for pneumococcal infection and is potentially involved in distinct stages of pneumococcal disease. This Streptococcus pneumoniae protein is Immunoglobulin A1 protease (iga).